The sequence spans 492 residues: Phenylalanine--tRNA ligase alpha subunit (492 aa).

L-phenylalanine is bound by residues threonine 335, 374 to 376 (QLE), and tyrosine 414. Position 416 (glutamate 416) interacts with Mg(2+). Phenylalanine 439 serves as a coordination point for L-phenylalanine.

Belongs to the class-II aminoacyl-tRNA synthetase family. Phe-tRNA synthetase alpha subunit type 2 subfamily. In terms of assembly, tetramer of two alpha and two beta subunits. It depends on Mg(2+) as a cofactor.

The protein localises to the cytoplasm. It catalyses the reaction tRNA(Phe) + L-phenylalanine + ATP = L-phenylalanyl-tRNA(Phe) + AMP + diphosphate + H(+). The polypeptide is Phenylalanine--tRNA ligase alpha subunit (Methanosarcina acetivorans (strain ATCC 35395 / DSM 2834 / JCM 12185 / C2A)).